The sequence spans 118 residues: Protein TusC (118 aa).

It belongs to the DsrF/TusC family. Heterohexamer, formed by a dimer of trimers. The hexameric TusBCD complex contains 2 copies each of TusB, TusC and TusD. The TusBCD complex interacts with TusE.

It localises to the cytoplasm. In terms of biological role, part of a sulfur-relay system required for 2-thiolation of 5-methylaminomethyl-2-thiouridine (mnm(5)s(2)U) at tRNA wobble positions. The polypeptide is Protein TusC (Salmonella gallinarum (strain 287/91 / NCTC 13346)).